The primary structure comprises 918 residues: E3 ubiquitin-protein ligase CBL-B-A (918 aa).

Positions 1–18 are enriched in low complexity; it reads MASGSGSSSSTSSSALSG. Residues 1–27 form a disordered region; the sequence is MASGSGSSSSTSSSALSGRLPGSRSAN. A 4H region spans residues 46-178; sequence PPKQAAADRR…KAIFPSGQFQ (133 aa). One can recognise a Cbl-PTB domain in the interval 46-354; sequence PPKQAAADRR…GRSYNPDLTG (309 aa). The EF-hand-like stretch occupies residues 179 to 251; the sequence is GDNFRITKAD…FEFDIFTRLF (73 aa). Ca(2+) is bound by residues D232, T234, N236, Y238, and E243. Residues 252–354 form an SH2-like region; it reads QPWGSILRNW…GRSYNPDLTG (103 aa). R297 serves as a coordination point for 4-O-phospho-L-tyrosine. The segment at 355–383 is linker; it reads LCEPTPHDHIKVTQEQYELYCEMGSTFQL. An RING-type zinc finger spans residues 384-423; it reads CKICAENDKDVKIEPCGHLMCTSCLTSWQESDGQGCPFCR. 3 disordered regions span residues 481–582, 780–831, and 857–918; these read NERQ…RTCR, FPPA…PPAR, and HSDP…MRPT. Residues 483 to 497 show a composition bias toward polar residues; it reads RQNSPVTSPGSSPLS. Composition is skewed to pro residues over residues 554–576 and 821–830; these read LPAP…PIPP and PSQPPPPPPA. Residues 898–918 are compositionally biased toward polar residues; that stretch reads KASNTKGELLLPNQNLIMRPT.

As to quaternary structure, interacts with several SH3 domain-containing proteins and with poly-ubiquitinated proteins.

The protein resides in the cytoplasm. It catalyses the reaction S-ubiquitinyl-[E2 ubiquitin-conjugating enzyme]-L-cysteine + [acceptor protein]-L-lysine = [E2 ubiquitin-conjugating enzyme]-L-cysteine + N(6)-ubiquitinyl-[acceptor protein]-L-lysine.. The protein operates within protein modification; protein ubiquitination. Its function is as follows. E3 ubiquitin-protein ligase which accepts ubiquitin from specific E2 ubiquitin-conjugating enzymes, and transfers it to substrates, generally promoting their degradation by the proteasome. This chain is E3 ubiquitin-protein ligase CBL-B-A (cblb-a), found in Xenopus laevis (African clawed frog).